The sequence spans 283 residues: Thymidylate synthase (283 aa).

Arg-22 is a dUMP binding site. Cys-160 functions as the Nucleophile in the catalytic mechanism. DUMP is bound by residues 180–183 (RSCD), Asn-191, and 221–223 (HIY). Asp-183 contacts (6R)-5,10-methylene-5,6,7,8-tetrahydrofolate. A (6R)-5,10-methylene-5,6,7,8-tetrahydrofolate-binding site is contributed by Ser-282.

It belongs to the thymidylate synthase family. Bacterial-type ThyA subfamily. As to quaternary structure, homodimer.

It localises to the cytoplasm. The catalysed reaction is dUMP + (6R)-5,10-methylene-5,6,7,8-tetrahydrofolate = 7,8-dihydrofolate + dTMP. It participates in pyrimidine metabolism; dTTP biosynthesis. In terms of biological role, catalyzes the reductive methylation of 2'-deoxyuridine-5'-monophosphate (dUMP) to 2'-deoxythymidine-5'-monophosphate (dTMP) while utilizing 5,10-methylenetetrahydrofolate (mTHF) as the methyl donor and reductant in the reaction, yielding dihydrofolate (DHF) as a by-product. This enzymatic reaction provides an intracellular de novo source of dTMP, an essential precursor for DNA biosynthesis. The chain is Thymidylate synthase from Shewanella pealeana (strain ATCC 700345 / ANG-SQ1).